The sequence spans 219 residues: Response regulator ArlR (219 aa).

Positions Gln3 to Leu116 constitute a Response regulatory domain. A 4-aspartylphosphate modification is found at Asp52. A DNA-binding region (ompR/PhoB-type) is located at residues Lys122–Arg219.

In terms of processing, phosphorylated by ArlS.

It localises to the cytoplasm. Functionally, member of the two-component regulatory system ArlS/ArlR involved in the regulation of adhesion, autolysis, multidrug resistance and virulence. The chain is Response regulator ArlR (arlR) from Staphylococcus aureus (strain USA300).